Here is a 107-residue protein sequence, read N- to C-terminus: Flagellar hook-basal body complex protein FliE (107 aa).

It belongs to the FliE family.

It is found in the bacterial flagellum basal body. This chain is Flagellar hook-basal body complex protein FliE, found in Mesorhizobium japonicum (strain LMG 29417 / CECT 9101 / MAFF 303099) (Mesorhizobium loti (strain MAFF 303099)).